A 109-amino-acid chain; its full sequence is Cell division protein ZapA (109 aa).

Residues 21 to 99 adopt a coiled-coil conformation; sequence PEQQDALNQA…IEQALLEQGR (79 aa).

Belongs to the ZapA family. Type 1 subfamily. In terms of assembly, homodimer. Interacts with FtsZ.

The protein localises to the cytoplasm. Its function is as follows. Activator of cell division through the inhibition of FtsZ GTPase activity, therefore promoting FtsZ assembly into bundles of protofilaments necessary for the formation of the division Z ring. It is recruited early at mid-cell but it is not essential for cell division. This is Cell division protein ZapA from Pectobacterium carotovorum subsp. carotovorum (strain PC1).